Reading from the N-terminus, the 398-residue chain is Succinate--CoA ligase [ADP-forming] subunit beta (398 aa).

The 246-residue stretch at 9 to 254 folds into the ATP-grasp domain; the sequence is KAVLREFGVP…ETEEDAKEIE (246 aa). Residues Lys-46, 53 to 55, Glu-109, Ser-112, and Glu-117 each bind ATP; that span reads GRG. Residues Asn-209 and Asp-223 each contribute to the Mg(2+) site. Substrate-binding positions include Asn-274 and 331–333; that span reads GIM.

It belongs to the succinate/malate CoA ligase beta subunit family. As to quaternary structure, heterotetramer of two alpha and two beta subunits. It depends on Mg(2+) as a cofactor.

It carries out the reaction succinate + ATP + CoA = succinyl-CoA + ADP + phosphate. The catalysed reaction is GTP + succinate + CoA = succinyl-CoA + GDP + phosphate. Its pathway is carbohydrate metabolism; tricarboxylic acid cycle; succinate from succinyl-CoA (ligase route): step 1/1. In terms of biological role, succinyl-CoA synthetase functions in the citric acid cycle (TCA), coupling the hydrolysis of succinyl-CoA to the synthesis of either ATP or GTP and thus represents the only step of substrate-level phosphorylation in the TCA. The beta subunit provides nucleotide specificity of the enzyme and binds the substrate succinate, while the binding sites for coenzyme A and phosphate are found in the alpha subunit. The polypeptide is Succinate--CoA ligase [ADP-forming] subunit beta (Rhodopseudomonas palustris (strain ATCC BAA-98 / CGA009)).